Reading from the N-terminus, the 346-residue chain is Holliday junction branch migration complex subunit RuvB (346 aa).

Positions M1–Y182 are large ATPase domain (RuvB-L). ATP is bound by residues L21, R22, G63, K66, T67, T68, E129 to F131, R172, Y182, and R219. T67 provides a ligand contact to Mg(2+). A small ATPAse domain (RuvB-S) region spans residues T183–L253. The tract at residues N256–N346 is head domain (RuvB-H). DNA-binding residues include R292, R311, and R316.

The protein belongs to the RuvB family. In terms of assembly, homohexamer. Forms an RuvA(8)-RuvB(12)-Holliday junction (HJ) complex. HJ DNA is sandwiched between 2 RuvA tetramers; dsDNA enters through RuvA and exits via RuvB. An RuvB hexamer assembles on each DNA strand where it exits the tetramer. Each RuvB hexamer is contacted by two RuvA subunits (via domain III) on 2 adjacent RuvB subunits; this complex drives branch migration. In the full resolvosome a probable DNA-RuvA(4)-RuvB(12)-RuvC(2) complex forms which resolves the HJ.

The protein localises to the cytoplasm. The enzyme catalyses ATP + H2O = ADP + phosphate + H(+). Its function is as follows. The RuvA-RuvB-RuvC complex processes Holliday junction (HJ) DNA during genetic recombination and DNA repair, while the RuvA-RuvB complex plays an important role in the rescue of blocked DNA replication forks via replication fork reversal (RFR). RuvA specifically binds to HJ cruciform DNA, conferring on it an open structure. The RuvB hexamer acts as an ATP-dependent pump, pulling dsDNA into and through the RuvAB complex. RuvB forms 2 homohexamers on either side of HJ DNA bound by 1 or 2 RuvA tetramers; 4 subunits per hexamer contact DNA at a time. Coordinated motions by a converter formed by DNA-disengaged RuvB subunits stimulates ATP hydrolysis and nucleotide exchange. Immobilization of the converter enables RuvB to convert the ATP-contained energy into a lever motion, pulling 2 nucleotides of DNA out of the RuvA tetramer per ATP hydrolyzed, thus driving DNA branch migration. The RuvB motors rotate together with the DNA substrate, which together with the progressing nucleotide cycle form the mechanistic basis for DNA recombination by continuous HJ branch migration. Branch migration allows RuvC to scan DNA until it finds its consensus sequence, where it cleaves and resolves cruciform DNA. In Rhizobium leguminosarum bv. trifolii (strain WSM2304), this protein is Holliday junction branch migration complex subunit RuvB.